Reading from the N-terminus, the 160-residue chain is SsrA-binding protein (160 aa).

A disordered region spans residues 134-160; it reads RKAHDKREAVKERDWNRDKARLMRDRG. The span at 138-160 shows a compositional bias: basic and acidic residues; that stretch reads DKREAVKERDWNRDKARLMRDRG.

The protein belongs to the SmpB family.

It is found in the cytoplasm. In terms of biological role, required for rescue of stalled ribosomes mediated by trans-translation. Binds to transfer-messenger RNA (tmRNA), required for stable association of tmRNA with ribosomes. tmRNA and SmpB together mimic tRNA shape, replacing the anticodon stem-loop with SmpB. tmRNA is encoded by the ssrA gene; the 2 termini fold to resemble tRNA(Ala) and it encodes a 'tag peptide', a short internal open reading frame. During trans-translation Ala-aminoacylated tmRNA acts like a tRNA, entering the A-site of stalled ribosomes, displacing the stalled mRNA. The ribosome then switches to translate the ORF on the tmRNA; the nascent peptide is terminated with the 'tag peptide' encoded by the tmRNA and targeted for degradation. The ribosome is freed to recommence translation, which seems to be the essential function of trans-translation. In Azorhizobium caulinodans (strain ATCC 43989 / DSM 5975 / JCM 20966 / LMG 6465 / NBRC 14845 / NCIMB 13405 / ORS 571), this protein is SsrA-binding protein.